The chain runs to 491 residues: Glutamyl-tRNA(Gln) amidotransferase subunit A (491 aa).

Residues lysine 76 and serine 154 each act as charge relay system in the active site. The active-site Acyl-ester intermediate is the serine 178.

It belongs to the amidase family. GatA subfamily. Heterotrimer of A, B and C subunits.

It carries out the reaction L-glutamyl-tRNA(Gln) + L-glutamine + ATP + H2O = L-glutaminyl-tRNA(Gln) + L-glutamate + ADP + phosphate + H(+). In terms of biological role, allows the formation of correctly charged Gln-tRNA(Gln) through the transamidation of misacylated Glu-tRNA(Gln) in organisms which lack glutaminyl-tRNA synthetase. The reaction takes place in the presence of glutamine and ATP through an activated gamma-phospho-Glu-tRNA(Gln). This is Glutamyl-tRNA(Gln) amidotransferase subunit A from Cereibacter sphaeroides (strain ATCC 17023 / DSM 158 / JCM 6121 / CCUG 31486 / LMG 2827 / NBRC 12203 / NCIMB 8253 / ATH 2.4.1.) (Rhodobacter sphaeroides).